We begin with the raw amino-acid sequence, 399 residues long: Proteinase-activated receptor 2 (399 aa).

The first 25 residues, 1-25 (MRSLSLAWLLGGITLLAASVSCSRT), serve as a signal peptide directing secretion. Residues 26 to 38 (ENLAPGRNNSKGR) constitute a propeptide, removed for receptor activation. An N-linked (GlcNAc...) asparagine glycan is attached at N33. At 39-73 (SLIGRLETQPPITGKGVPVEPGFSIDEFSASILTG) the chain is on the extracellular side. Residues 74–103 (KLTTVFLPVVYIIVFVIGLPSNGMALWIFL) form a helical membrane-spanning segment. Residues 104–110 (FRTKKKH) are Cytoplasmic-facing. The chain crosses the membrane as a helical span at residues 111 to 139 (PAVIYMANLALADLLSVIWFPLKISYHLH). Residues 140 to 151 (GNNWVYGEALCK) are Extracellular-facing. The cysteines at positions 150 and 228 are disulfide-linked. Residues 152-179 (VLIGFFYGNMYCSILFMTCLSVQRYWVI) traverse the membrane as a helical segment. Topologically, residues 180 to 185 (VNPMGH) are cytoplasmic. The chain crosses the membrane as a helical span at residues 186 to 213 (PRKKANIAVGVSLAIWLLIFLVTIPLYV). At 214-237 (MKQTIYIPALNITTCHDVLPEEVL) the chain is on the extracellular side. N224 carries an N-linked (GlcNAc...) asparagine glycan. A helical membrane pass occupies residues 238 to 271 (VGDMFNYFLSLAIGVFLFPALLTASAYVLMIKTL). At 272–279 (RSSAMDEH) the chain is on the cytoplasmic side. A helical membrane pass occupies residues 280–319 (SEKKRQRAIRLIITVLAMYFICFAPSNLLLVVHYFLIKTQ). The Extracellular segment spans residues 320–325 (RQSHVY). Residues 326–349 (ALYLVALCLSTLNSCIDPFVYYFV) form a helical membrane-spanning segment. Residues 350–399 (SKDFRDHARNALLCRSVRTVNRMQISLSSNKFSRKSGSYSSSSTSVKTSY) are Cytoplasmic-facing. The S-palmitoyl cysteine moiety is linked to residue C363.

Belongs to the G-protein coupled receptor 1 family. As to quaternary structure, interacts with TLR4, COPS5 and TMED2. Interacts with GNAQ, GNA11, GNA12, GNA13 and GNA14. A proteolytic cleavage generates a new N-terminus that functions as a tethered ligand. Activating serine proteases include trypsin, mast cell tryptase, coagulation factors VII and Xa, myeloblastin/PRTN3 and membrane-type serine protease 1/ST14. Proposed subsequent cleavage by serine proteases is leading to receptor deactivation and include neutrophil elastase and cathepsin G. At least in part, implicated proteases are also shown to activate the receptor; the glycosylation status of the receptor is thought to contribute to the difference. In terms of processing, N-glycosylated and sialylated. Post-translationally, multiple phosphorylated on serine and threonine residues in the cytoplasmic region upon receptor activation; required for receptor desensitization and recruitment of beta-arrestin. Monoubiquitinated by Cbl at the plasma membrane and in early endosomes; not required for receptor endocytosis but for translocation to late endosomes or lysosomes. Deubiquitination involves Stambp and Usp8; required for lysosomal trafficking and receptor degradation.

Its subcellular location is the cell membrane. Receptor for trypsin and trypsin-like enzymes coupled to G proteins. Its function is mediated through the activation of several signaling pathways including phospholipase C (PLC), intracellular calcium, mitogen-activated protein kinase (MAPK), I-kappaB kinase/NF-kappaB and Rho. Can also be transactivated by cleaved F2r/Par1. Involved in modulation of inflammatory responses and regulation of innate and adaptive immunity, and acts as a sensor for proteolytic enzymes generated during infection. Generally is promoting inflammation. Can signal synergistically with Tlr4 and probably Tlr2 in inflammatory responses and modulates Tlr3 signaling. Has a protective role in establishing the endothelial barrier; the activity involves coagulation factor X. Regulates endothelial cell barrier integrity during neutrophil extravasation, probably following proteolytic cleavage by PRTN3. Proposed to have a bronchoprotective role in airway epithelium, but also shown to compromise the airway epithelial barrier by interrupting E-cadherin adhesion. Involved in the regulation of vascular tone; activation results in hypotension presumably mediated by vasodilation. Associates with a subset of G proteins alpha subunits such as GNAQ, GNA11, GNA14, GNA12 and GNA13, but probably not with G(o)-alpha, G(i) subunit alpha-1 and G(i) subunit alpha-2. Believed to be a class B receptor which internalizes as a complex with arrestin and traffic with it to endosomal vesicles, presumably as desensitized receptor, for extended periods of time. Mediates inhibition of TNF-alpha stimulated JNK phosphorylation via coupling to GNAQ and GNA11; the function involves dissociation of Ripk1 and Tradd from Tnfr1. Mediates phosphorylation of nuclear factor NF-kappa-B RELA subunit at 'Ser-536'; the function involves Ikbkb and is predominantly independent of G proteins. Involved in cellular migration. Involved in cytoskeletal rearrangement and chemotaxis through beta-arrestin-promoted scaffolds; the function is independent of GNAQ and GNA11 and involves promotion of cofilin dephosphorylation and actin filament severing. Induces redistribution of Cops5 from the plasma membrane to the cytosol and activation of the JNK cascade is mediated by Cops5. Involved in the recruitment of leukocytes to the sites of inflammation and is the major PAR receptor capable of modulating eosinophil function such as pro-inflammatory cytokine secretion, superoxide production and degranulation. During inflammation promotes dendritic cell maturation, trafficking to the lymph nodes and subsequent T-cell activation. Involved in antimicrobial response of innate immune cells; activation enhances phagocytosis of Gram-positive and killing of Gram-negative bacteria. Acts synergistically with interferon-gamma in enhancing antiviral responses. Mediates activation of pro-inflammatory and pro-fibrotic responses in fibroblasts, triggered by coagulation factor Xa (F10). Probably mediates activation of barrier protective signaling responses in endothelial cells, triggered by coagulation factor Xa (F10). This chain is Proteinase-activated receptor 2 (F2rl1), found in Mus musculus (Mouse).